A 541-amino-acid polypeptide reads, in one-letter code: Sorting nexin-27 (541 aa).

The tract at residues 1–26 is disordered; that stretch reads MADEDGEGIHPAAPHRNGGGGGGGGS. Gly residues predominate over residues 17–26; sequence NGGGGGGGGS. The PDZ domain maps to 43-136; that stretch reads VVRIVKSESG…ELILTVLSVP (94 aa). Phosphoserine occurs at positions 51 and 62. A PX domain is found at 161-269; the sequence is QAVPISVPTY…EFLSESDENY (109 aa). A Ras-associating domain is found at 273–362; that stretch reads SDVELRVALP…TCLTIRKWLF (90 aa). The interval 273–362 is FERM-like region F1; sequence SDVELRVALP…TCLTIRKWLF (90 aa). Residues 373-421 form an FERM-like region F2 region; that stretch reads NDLAVTYFFHQAVDDVKKGYIKAEEKSYQLQKLYEQRKMVMYLNMLRTC. Residues 425–525 form an FERM-like region F3 region; the sequence is NEIIFPHCAC…RVFCELKWRK (101 aa).

In terms of assembly, core component of the SNX27-retromer, a multiprotein complex composed of SNX27, the WASH complex and the retromer complex. Interacts (via PDZ domain) with a number of target transmembrane proteins (via PDZ-binding motif): ABCC4, ADRB2, ARHGEF7, GRIA1, GRIA2, GRIN1, GRIN2A GRIN2C, KCNJ6, KCNJ9 and SLC2A1/GLUT1. Interacts (via the FERM-like regions) with the WASH complex. Interacts with SNX1. Interacts with CYTIP. Interacts with DGKZ. Interacts with MCC. Interacts (via PDZ domains) with SLC9A3; directs SLC9A3 membrane insertion from early endosomes to the plasma membrane.

It is found in the early endosome membrane. Its subcellular location is the cytoplasm. The protein resides in the cytosol. Involved in the retrograde transport from endosome to plasma membrane, a trafficking pathway that promotes the recycling of internalized transmembrane proteins. Following internalization, endocytosed transmembrane proteins are delivered to early endosomes and recycled to the plasma membrane instead of being degraded in lysosomes. SNX27 specifically binds and directs sorting of a subset of transmembrane proteins containing a PDZ-binding motif at the C-terminus: following interaction with target transmembrane proteins, associates with the retromer complex, preventing entry into the lysosomal pathway, and promotes retromer-tubule based plasma membrane recycling. SNX27 also binds with the WASH complex. Interacts with membranes containing phosphatidylinositol-3-phosphate (PtdIns(3P)). May participate in establishment of natural killer cell polarity. Recruits CYTIP to early endosomes. The sequence is that of Sorting nexin-27 (SNX27) from Bos taurus (Bovine).